Reading from the N-terminus, the 279-residue chain is Energy-coupling factor transporter ATP-binding protein EcfA1 (279 aa).

One can recognise an ABC transporter domain in the interval 8–240 (IKFENVSFSY…KQFLRDINLD (233 aa)). ATP is bound at residue 41 to 48 (GHNGSGKS).

It belongs to the ABC transporter superfamily. Energy-coupling factor EcfA family. Forms a stable energy-coupling factor (ECF) transporter complex composed of 2 membrane-embedded substrate-binding proteins (S component), 2 ATP-binding proteins (A component) and 2 transmembrane proteins (T component).

It is found in the cell membrane. ATP-binding (A) component of a common energy-coupling factor (ECF) ABC-transporter complex. Unlike classic ABC transporters this ECF transporter provides the energy necessary to transport a number of different substrates. This Mycoplasmoides gallisepticum (strain R(low / passage 15 / clone 2)) (Mycoplasma gallisepticum) protein is Energy-coupling factor transporter ATP-binding protein EcfA1.